The chain runs to 444 residues: Multidrug resistance protein MdtA (444 aa).

Positions 1–20 (MKSQSKRTSRLFVFVGVVVA) are cleaved as a signal peptide. Positions 37-52 (NNTSGAQQSARGQDTS) are enriched in polar residues. Disordered regions lie at residues 37–60 (NNTS…RNTP) and 398–444 (TPRS…AEKS). Residues 406–419 (ANPASAEKAAAEAE) show a composition bias toward low complexity. Over residues 435–444 (ARSTTAAEKS) the composition is skewed to polar residues.

This sequence belongs to the membrane fusion protein (MFP) (TC 8.A.1) family. As to quaternary structure, part of a tripartite efflux system composed of MdtA, MdtB and MdtC.

The protein localises to the cell inner membrane. The chain is Multidrug resistance protein MdtA from Yersinia pestis bv. Antiqua (strain Antiqua).